The sequence spans 611 residues: Cilia- and flagella-associated protein 100 (611 aa).

The span at 1–17 shows a compositional bias: polar residues; the sequence is MSEIPSTIVSKNMTNDK. The interval 1 to 57 is disordered; it reads MSEIPSTIVSKNMTNDKNSLESMNISSSSSTEENPKKQARKNEEHGPDPSANPFHLS. Residues 20 to 32 are compositionally biased toward low complexity; that stretch reads LESMNISSSSSTE. The segment covering 33-47 has biased composition (basic and acidic residues); that stretch reads ENPKKQARKNEEHGP. Coiled coils occupy residues 101–128, 164–203, and 230–257; these read SLRR…RAFR, ALDV…FDEF, and LEIR…KHYK. Disordered stretches follow at residues 287-323 and 338-380; these read EVSE…GQGT and SPSY…GEEP. Over residues 338–357 the composition is skewed to low complexity; sequence SPSYLSSPQQGSQPSESSGG. 2 coiled-coil regions span residues 393–432 and 526–578; these read VFRE…MDRE and QVKI…RGRT.

Belongs to the CFAP100 family.

It is found in the cytoplasm. The protein localises to the cytoskeleton. It localises to the cilium axoneme. May play a role in ciliary/flagellar motility by regulating the assembly and the activity of axonemal inner dynein arm. In Homo sapiens (Human), this protein is Cilia- and flagella-associated protein 100.